The chain runs to 559 residues: Probable D-2-hydroxyglutarate dehydrogenase, mitochondrial (559 aa).

Residues 1–80 (MARRAAAGLL…MNFEVQKRSF (80 aa)) constitute a mitochondrion transit peptide. The region spanning 131–310 (YKGSSQLLLL…TKIAILTPAK (180 aa)) is the FAD-binding PCMH-type domain.

Belongs to the FAD-binding oxidoreductase/transferase type 4 family. In terms of assembly, homodimer. Requires FAD as cofactor.

The protein resides in the mitochondrion. The enzyme catalyses (R)-2-hydroxyglutarate + A = 2-oxoglutarate + AH2. Functionally, catalyzes the oxidation of D-2-hydroxyglutarate to alpha-ketoglutarate. This Oryza sativa subsp. japonica (Rice) protein is Probable D-2-hydroxyglutarate dehydrogenase, mitochondrial (D2HGDH).